Reading from the N-terminus, the 187-residue chain is Elongation factor P (187 aa).

This sequence belongs to the elongation factor P family.

It is found in the cytoplasm. It functions in the pathway protein biosynthesis; polypeptide chain elongation. In terms of biological role, involved in peptide bond synthesis. Stimulates efficient translation and peptide-bond synthesis on native or reconstituted 70S ribosomes in vitro. Probably functions indirectly by altering the affinity of the ribosome for aminoacyl-tRNA, thus increasing their reactivity as acceptors for peptidyl transferase. This is Elongation factor P from Corynebacterium aurimucosum (strain ATCC 700975 / DSM 44827 / CIP 107346 / CN-1) (Corynebacterium nigricans).